The chain runs to 375 residues: Succinyl-diaminopimelate desuccinylase (375 aa).

H66 lines the Zn(2+) pocket. D68 is an active-site residue. D99 contributes to the Zn(2+) binding site. The Proton acceptor role is filled by E133. Positions 134, 162, and 348 each coordinate Zn(2+).

Belongs to the peptidase M20A family. DapE subfamily. In terms of assembly, homodimer. Zn(2+) serves as cofactor. Requires Co(2+) as cofactor.

It carries out the reaction N-succinyl-(2S,6S)-2,6-diaminopimelate + H2O = (2S,6S)-2,6-diaminopimelate + succinate. It functions in the pathway amino-acid biosynthesis; L-lysine biosynthesis via DAP pathway; LL-2,6-diaminopimelate from (S)-tetrahydrodipicolinate (succinylase route): step 3/3. Catalyzes the hydrolysis of N-succinyl-L,L-diaminopimelic acid (SDAP), forming succinate and LL-2,6-diaminopimelate (DAP), an intermediate involved in the bacterial biosynthesis of lysine and meso-diaminopimelic acid, an essential component of bacterial cell walls. This is Succinyl-diaminopimelate desuccinylase from Citrobacter koseri (strain ATCC BAA-895 / CDC 4225-83 / SGSC4696).